Here is a 196-residue protein sequence, read N- to C-terminus: ATP-dependent Clp protease proteolytic subunit (196 aa).

Ser101 functions as the Nucleophile in the catalytic mechanism. His126 is a catalytic residue.

The protein belongs to the peptidase S14 family. Component of the chloroplastic Clp protease core complex.

Its subcellular location is the plastid. It is found in the chloroplast stroma. It catalyses the reaction Hydrolysis of proteins to small peptides in the presence of ATP and magnesium. alpha-casein is the usual test substrate. In the absence of ATP, only oligopeptides shorter than five residues are hydrolyzed (such as succinyl-Leu-Tyr-|-NHMec, and Leu-Tyr-Leu-|-Tyr-Trp, in which cleavage of the -Tyr-|-Leu- and -Tyr-|-Trp bonds also occurs).. In terms of biological role, cleaves peptides in various proteins in a process that requires ATP hydrolysis. Has a chymotrypsin-like activity. Plays a major role in the degradation of misfolded proteins. This is ATP-dependent Clp protease proteolytic subunit from Eucalyptus globulus subsp. globulus (Tasmanian blue gum).